The primary structure comprises 483 residues: GTPase Der (483 aa).

EngA-type G domains are found at residues 3 to 167 and 212 to 387; these read FTLA…GEER and LRIA…EIWN. GTP-binding positions include 9-16, 56-60, 119-122, 218-225, 265-269, and 330-333; these read GRPNVGKS, DTAGL, NKAE, GRPNAGKS, DTAGM, and NKWD. Residues 388 to 472 form the KH-like domain; the sequence is RRISTGRLNR…PIRLSLRTSD (85 aa).

Belongs to the TRAFAC class TrmE-Era-EngA-EngB-Septin-like GTPase superfamily. EngA (Der) GTPase family. As to quaternary structure, associates with the 50S ribosomal subunit.

Functionally, GTPase that plays an essential role in the late steps of ribosome biogenesis. This chain is GTPase Der, found in Brucella suis biovar 1 (strain 1330).